The sequence spans 323 residues: Aldo-keto reductase family 1 member C1 (323 aa).

Residues 20 to 24 (GFGTY) and Asp50 each bind NADP(+). Tyr24 is a substrate binding site. The Proton donor role is filled by Tyr55. His117 lines the substrate pocket. NADP(+) is bound by residues 166 to 167 (SN), Gln190, and 216 to 222 (YSALGSH). Residues His222 and Trp227 each contribute to the substrate site. An NADP(+)-binding site is contributed by 270–280 (KSYNEQRIREN).

The protein belongs to the aldo/keto reductase family. In terms of assembly, monomer. As to expression, expressed in liver, adrenal gland, intestine and kidney.

It localises to the cytoplasm. The protein resides in the cytosol. It catalyses the reaction a 3alpha-hydroxysteroid + NADP(+) = a 3-oxosteroid + NADPH + H(+). It carries out the reaction a 3alpha-hydroxysteroid + NAD(+) = a 3-oxosteroid + NADH + H(+). The catalysed reaction is (17R,20S)-17,20-dihydroxypregn-4-en-3-one + NADP(+) = 17alpha-hydroxyprogesterone + NADPH + H(+). The enzyme catalyses (17R,20S)-17,20-dihydroxypregn-4-en-3-one + NAD(+) = 17alpha-hydroxyprogesterone + NADH + H(+). It catalyses the reaction (20S)-hydroxypregn-4-en-3-one + NADP(+) = progesterone + NADPH + H(+). It carries out the reaction (20S)-hydroxypregn-4-en-3-one + NAD(+) = progesterone + NADH + H(+). The catalysed reaction is (1R,2R)-1,2-dihydrobenzene-1,2-diol + NADP(+) = catechol + NADPH + H(+). The enzyme catalyses (S)-indan-1-ol + NAD(+) = indan-1-one + NADH + H(+). It catalyses the reaction (S)-indan-1-ol + NADP(+) = indan-1-one + NADPH + H(+). It carries out the reaction 5alpha-androstane-3alpha,17beta-diol + NADP(+) = 17beta-hydroxy-5alpha-androstan-3-one + NADPH + H(+). The catalysed reaction is 5alpha-androstane-3beta,17beta-diol + NADP(+) = 17beta-hydroxy-5alpha-androstan-3-one + NADPH + H(+). The enzyme catalyses 5alpha-androstane-3alpha,17beta-diol + NAD(+) = 17beta-hydroxy-5alpha-androstan-3-one + NADH + H(+). It catalyses the reaction 17beta-hydroxy-5alpha-androstan-3-one + NADP(+) = 5alpha-androstan-3,17-dione + NADPH + H(+). It carries out the reaction androsterone + NADP(+) = 5alpha-androstan-3,17-dione + NADPH + H(+). The catalysed reaction is androsterone + NADPH + H(+) = 5alpha-androstane-3alpha,17beta-diol + NADP(+). The enzyme catalyses 5alpha-androstane-3alpha,17beta-diol + NAD(+) = androsterone + NADH + H(+). It catalyses the reaction 17beta-estradiol + NADP(+) = estrone + NADPH + H(+). It carries out the reaction 17beta-estradiol + NAD(+) = estrone + NADH + H(+). The catalysed reaction is testosterone + NADP(+) = androst-4-ene-3,17-dione + NADPH + H(+). The enzyme catalyses 20alpha-hydroxy-5beta-pregnan-3-one + NADP(+) = 5beta-pregnan-3,20-dione + NADPH + H(+). It catalyses the reaction 3beta-hydroxy-5beta-pregnane-20-one + NADP(+) = 5beta-pregnan-3,20-dione + NADPH + H(+). It carries out the reaction 3beta-hydroxy-5beta-pregnane-20-one + NADPH + H(+) = 3beta,20alpha-dihydroxy-5beta-pregnane + NADP(+). The catalysed reaction is (3beta,5alpha,17beta)-3-hydroxyandrostan-17-yl sulfate + NADP(+) = 5alpha-dihydrotestosterone sulfate + NADPH + H(+). It functions in the pathway steroid metabolism. Cytosolic aldo-keto reductase that catalyzes the NADH and NADPH-dependent reduction of ketosteroids to hydroxysteroids. Most probably acts as a reductase in vivo since the oxidase activity measured in vitro is inhibited by physiological concentrations of NADPH. Displays a broad positional specificity acting on positions 3, 17 and 20 of steroids and regulates the metabolism of hormones like estrogens and androgens. May also reduce conjugated steroids such as 5alpha-dihydrotestosterone sulfate. Displays affinity for bile acids. The protein is Aldo-keto reductase family 1 member C1 (AKR1C1) of Macaca fuscata fuscata (Japanese macaque).